We begin with the raw amino-acid sequence, 172 residues long: Crossover junction endodeoxyribonuclease RuvC (172 aa).

Active-site residues include Asp-12, Glu-71, and Asp-143. Mg(2+) contacts are provided by Asp-12, Glu-71, and Asp-143.

This sequence belongs to the RuvC family. Homodimer which binds Holliday junction (HJ) DNA. The HJ becomes 2-fold symmetrical on binding to RuvC with unstacked arms; it has a different conformation from HJ DNA in complex with RuvA. In the full resolvosome a probable DNA-RuvA(4)-RuvB(12)-RuvC(2) complex forms which resolves the HJ. The cofactor is Mg(2+).

It is found in the cytoplasm. The enzyme catalyses Endonucleolytic cleavage at a junction such as a reciprocal single-stranded crossover between two homologous DNA duplexes (Holliday junction).. In terms of biological role, the RuvA-RuvB-RuvC complex processes Holliday junction (HJ) DNA during genetic recombination and DNA repair. Endonuclease that resolves HJ intermediates. Cleaves cruciform DNA by making single-stranded nicks across the HJ at symmetrical positions within the homologous arms, yielding a 5'-phosphate and a 3'-hydroxyl group; requires a central core of homology in the junction. The consensus cleavage sequence is 5'-(A/T)TT(C/G)-3'. Cleavage occurs on the 3'-side of the TT dinucleotide at the point of strand exchange. HJ branch migration catalyzed by RuvA-RuvB allows RuvC to scan DNA until it finds its consensus sequence, where it cleaves and resolves the cruciform DNA. In Coxiella burnetii (strain CbuK_Q154) (Coxiella burnetii (strain Q154)), this protein is Crossover junction endodeoxyribonuclease RuvC.